Reading from the N-terminus, the 192-residue chain is Large ribosomal subunit protein uL5 (192 aa).

This sequence belongs to the universal ribosomal protein uL5 family. In terms of assembly, part of the 50S ribosomal subunit; contacts the 5S rRNA and probably tRNA. Forms a bridge to the 30S subunit in the 70S ribosome.

Its function is as follows. This is one of the proteins that bind and probably mediate the attachment of the 5S RNA into the large ribosomal subunit, where it forms part of the central protuberance. In the 70S ribosome it contacts protein S13 of the 30S subunit (bridge B1b), connecting the 2 subunits; this bridge is implicated in subunit movement. May contact the P site tRNA; the 5S rRNA and some of its associated proteins might help stabilize positioning of ribosome-bound tRNAs. This chain is Large ribosomal subunit protein uL5, found in Aeropyrum pernix (strain ATCC 700893 / DSM 11879 / JCM 9820 / NBRC 100138 / K1).